The sequence spans 373 residues: Cell surface Cu-only superoxide dismutase ARB_03674 (373 aa).

Positions M1–L55 are cleaved as a signal peptide. N-linked (GlcNAc...) asparagine glycosylation is found at N75 and N141. Cu cation is bound by residues H194, H196, and H212. C206 and C289 are oxidised to a cystine. 2 N-linked (GlcNAc...) asparagine glycosylation sites follow: N254 and N274. Residue H280 participates in Cu cation binding. 2 N-linked (GlcNAc...) asparagine glycosylation sites follow: N283 and N291. Residues G329 to A348 are disordered. Over residues A331–P340 the composition is skewed to low complexity. G352 carries the GPI-anchor amidated glycine lipid modification. A propeptide spans A353–L373 (removed in mature form).

This sequence belongs to the Cu-Zn superoxide dismutase family. Monomer. Cu cation serves as cofactor. The GPI-anchor is attached to the protein in the endoplasmic reticulum and serves to target the protein to the cell surface. There, the glucosamine-inositol phospholipid moiety is cleaved off and the GPI-modified mannoprotein is covalently attached via its lipidless GPI glycan remnant to the 1,6-beta-glucan of the outer cell wall layer.

The protein localises to the secreted. Its subcellular location is the cell wall. It localises to the cell membrane. It catalyses the reaction 2 superoxide + 2 H(+) = H2O2 + O2. Superoxide dismutases serve to convert damaging superoxide radicals, a key form of ROS, to less damaging hydrogen peroxide that can be converted into water by catalase action. Degrades host-derived reactive oxygen species to escape innate immune surveillance. Involved in the occurrence of miconazole-tolerant persisters in biofilms. Persisters are cells that survive high doses of an antimicrobial agent. The unusual attributes of SOD5-like fungal proteins, including the absence of zinc and an open active site that readily captures extracellular copper, make these SODs well suited to meet challenges in zinc and copper availability at the host-pathogen interface. This Arthroderma benhamiae (strain ATCC MYA-4681 / CBS 112371) (Trichophyton mentagrophytes) protein is Cell surface Cu-only superoxide dismutase ARB_03674.